The following is a 674-amino-acid chain: Zinc finger protein 750 (674 aa).

A CCHC-type zinc finger spans residues 25–51 (YKCFQCPFTCNEKSHLFNHMKYGLCKN). Zn(2+) is bound by residues C27, C30, H43, and C49. Disordered regions lie at residues 105–125 (EAKENLDLKNEPKSHAEKTTV), 370–466 (LAKN…QSHS), and 594–674 (TSSP…PRVS). Polar residues-rich tracts occupy residues 401–411 (SPTNFTQSSQG) and 444–466 (DSQTIISRENSPSFGNDGVQSHS).

Its subcellular location is the nucleus. Functionally, transcription factor involved in epidermis differentiation. The polypeptide is Zinc finger protein 750 (znf750) (Xenopus laevis (African clawed frog)).